The sequence spans 74 residues: Neuropeptide-like protein 33 (74 aa).

A signal peptide spans 1-21 (MISTSLLLVVLLFAILAIVDA). Residue tyrosine 72 is modified to Tyrosine amide.

Belongs to the YARP (YGGW-amide related peptide) family. Expressed in hypoderm.

It localises to the secreted. In terms of biological role, may have antifungic activity against D.coniospora. In Caenorhabditis elegans, this protein is Neuropeptide-like protein 33 (nlp-33).